The primary structure comprises 246 residues: D-erythrulose reductase (246 aa).

13–41 (LVTGAGKGIGRAVAVALCKAGARVTALSR) lines the NADP(+) pocket. Position 138 (serine 138) interacts with substrate. Residue tyrosine 151 is the Proton acceptor of the active site. NADP(+) is bound at residue lysine 155.

The protein belongs to the short-chain dehydrogenases/reductases (SDR) family. As to quaternary structure, homotetramer. The N-terminus is blocked. In terms of tissue distribution, highly expressed in kidney, and also found in high amounts in liver and testis. Low expression seen in all other tissues tested.

Its subcellular location is the cytoplasm. It carries out the reaction D-threitol + NADP(+) = D-erythrulose + NADPH + H(+). The catalysed reaction is xylitol + NADP(+) = L-xylulose + NADPH + H(+). Its function is as follows. Catalyzes the reduction of D-erythrulose to D-threitol with the concomitant oxidation of NAD(P)H to NAD(P)(+). NADH is less effective than NADPH. May also catalyze the reduction of L-xylulose. The polypeptide is D-erythrulose reductase (DER) (Gallus gallus (Chicken)).